The chain runs to 862 residues: Ubiquitin carboxyl-terminal hydrolase 13 (862 aa).

The UBP-type; degenerate zinc finger occupies 182–290; it reads QASKHAKSLV…KHLAHFGIDM (109 aa). Positions 206, 209, 226, and 239 each coordinate Zn(2+). The USP domain occupies 331–860; sequence TGMKNLGNSC…LGYIYFYHRI (530 aa). The Nucleophile role is filled by cysteine 340. UBA domains lie at 647–688 and 722–762; these read DIDE…IIAH and QPPE…IFSH. Histidine 822 functions as the Proton acceptor in the catalytic mechanism.

The protein belongs to the peptidase C19 family.

It catalyses the reaction Thiol-dependent hydrolysis of ester, thioester, amide, peptide and isopeptide bonds formed by the C-terminal Gly of ubiquitin (a 76-residue protein attached to proteins as an intracellular targeting signal).. Its activity is regulated as follows. Specifically inhibited by spautin-1 (specific and potent autophagy inhibitor-1), a derivative of MBCQ that binds to USP13 and inhibits deubiquitinase activity. In terms of biological role, deubiquitinase that mediates deubiquitination of target proteins and is involved in various processes such as autophagy and endoplasmic reticulum-associated degradation (ERAD). The polypeptide is Ubiquitin carboxyl-terminal hydrolase 13 (USP13) (Gallus gallus (Chicken)).